Reading from the N-terminus, the 69-residue chain is Conotoxin AbVIE (69 aa).

The N-terminal stretch at Val1–Ala17 is a signal peptide. A propeptide spanning residues Glu18–Thr40 is cleaved from the precursor. 3 disulfide bridges follow: Cys43–Cys57, Cys50–Cys61, and Cys56–Cys66.

This sequence belongs to the conotoxin O1 superfamily. In terms of tissue distribution, expressed by the venom duct.

It localises to the secreted. This chain is Conotoxin AbVIE, found in Conus abbreviatus (Abbreviated cone).